A 259-amino-acid polypeptide reads, in one-letter code: 4-hydroxy-tetrahydrodipicolinate reductase (259 aa).

NAD(+) is bound by residues 9 to 14 (GAGGRM) and E35. R36 is an NADP(+) binding site. NAD(+)-binding positions include 92–94 (GTT) and 116–119 (APNM). H149 functions as the Proton donor/acceptor in the catalytic mechanism. H150 is a binding site for (S)-2,3,4,5-tetrahydrodipicolinate. K153 acts as the Proton donor in catalysis. 159 to 160 (GT) serves as a coordination point for (S)-2,3,4,5-tetrahydrodipicolinate.

This sequence belongs to the DapB family.

The protein localises to the cytoplasm. The catalysed reaction is (S)-2,3,4,5-tetrahydrodipicolinate + NAD(+) + H2O = (2S,4S)-4-hydroxy-2,3,4,5-tetrahydrodipicolinate + NADH + H(+). It carries out the reaction (S)-2,3,4,5-tetrahydrodipicolinate + NADP(+) + H2O = (2S,4S)-4-hydroxy-2,3,4,5-tetrahydrodipicolinate + NADPH + H(+). It functions in the pathway amino-acid biosynthesis; L-lysine biosynthesis via DAP pathway; (S)-tetrahydrodipicolinate from L-aspartate: step 4/4. Its function is as follows. Catalyzes the conversion of 4-hydroxy-tetrahydrodipicolinate (HTPA) to tetrahydrodipicolinate. The chain is 4-hydroxy-tetrahydrodipicolinate reductase from Nitratidesulfovibrio vulgaris (strain DSM 19637 / Miyazaki F) (Desulfovibrio vulgaris).